A 585-amino-acid polypeptide reads, in one-letter code: Proline--tRNA ligase (585 aa).

This sequence belongs to the class-II aminoacyl-tRNA synthetase family. ProS type 1 subfamily. As to quaternary structure, homodimer.

It localises to the cytoplasm. It catalyses the reaction tRNA(Pro) + L-proline + ATP = L-prolyl-tRNA(Pro) + AMP + diphosphate. In terms of biological role, catalyzes the attachment of proline to tRNA(Pro) in a two-step reaction: proline is first activated by ATP to form Pro-AMP and then transferred to the acceptor end of tRNA(Pro). As ProRS can inadvertently accommodate and process non-cognate amino acids such as alanine and cysteine, to avoid such errors it has two additional distinct editing activities against alanine. One activity is designated as 'pretransfer' editing and involves the tRNA(Pro)-independent hydrolysis of activated Ala-AMP. The other activity is designated 'posttransfer' editing and involves deacylation of mischarged Ala-tRNA(Pro). The misacylated Cys-tRNA(Pro) is not edited by ProRS. The polypeptide is Proline--tRNA ligase (Corynebacterium diphtheriae (strain ATCC 700971 / NCTC 13129 / Biotype gravis)).